A 68-amino-acid chain; its full sequence is Putative membrane protein insertion efficiency factor (68 aa).

Belongs to the UPF0161 family.

It is found in the cell membrane. Could be involved in insertion of integral membrane proteins into the membrane. This chain is Putative membrane protein insertion efficiency factor, found in Syntrophomonas wolfei subsp. wolfei (strain DSM 2245B / Goettingen).